We begin with the raw amino-acid sequence, 44 residues long: uncharacterized protein (44 aa).

The protein localises to the plastid. The protein resides in the chloroplast. This is an uncharacterized protein from Trieres chinensis (Marine centric diatom).